Consider the following 297-residue polypeptide: MDLLGPMEMTEGSLCSFAAADDFYDDPCFNTSDMHFFEDLDPRLVHVGGLLKPEEHPHHHGHHHGHPHEEEHVRAPSGHHQAGRCLLWACKACKRKTTNADRRKAATMRERRRLSKVNEAFETLKRCTSTNPNQRLPKVEILRNAIRYIESLQALLREQEDAYYPVLEHYSGESDASSPRSNCSDGMMEYSGPPCSSRRRNSYDSSYYTESPNDPKHGKSSVVSSLDCLSSIVERISTDNSTCPILPPAEAVAEGSPCSPQEGASLNDSGAQIPSPTNCTPLPQDSSSSSNPIYQVL.

Residues lysine 52–proline 76 are disordered. Residues aspartate 101–leucine 152 enclose the bHLH domain. 2 disordered regions span residues serine 171–serine 221 and cysteine 243–leucine 297. 2 stretches are compositionally biased toward polar residues: residues serine 174–serine 184 and cysteine 258–leucine 297.

Efficient DNA binding requires dimerization with another bHLH protein. Seems to form active heterodimers with ITF-2.

Its subcellular location is the nucleus. Functionally, acts as a transcriptional activator that promotes transcription of muscle-specific target genes and plays a role in muscle differentiation. Induces fibroblasts to differentiate into myoblasts. Interacts with and is inhibited by the twist protein. This interaction probably involves the basic domains of both proteins. The chain is Myoblast determination protein 1 homolog (MYOD1) from Coturnix japonica (Japanese quail).